A 295-amino-acid chain; its full sequence is Elongation factor Ts (295 aa).

Positions 80 to 83 (TDFV) are involved in Mg(2+) ion dislocation from EF-Tu.

Belongs to the EF-Ts family.

Its subcellular location is the cytoplasm. Functionally, associates with the EF-Tu.GDP complex and induces the exchange of GDP to GTP. It remains bound to the aminoacyl-tRNA.EF-Tu.GTP complex up to the GTP hydrolysis stage on the ribosome. This Lysinibacillus sphaericus (strain C3-41) protein is Elongation factor Ts.